Reading from the N-terminus, the 267-residue chain is RWD domain-containing protein 3 (267 aa).

In terms of domain architecture, RWD spans 7–114 (QELSALAAIF…LWTQQNLRHI (108 aa)). Interaction with UBE2I/UBC9 regions lie at residues 13–15 (AAI) and 100–102 (VHE).

As to quaternary structure, interacts with UBE2I/UBC9, NFKBIA, HIF1A and NCOA2.

The protein localises to the nucleus. Its subcellular location is the cytoplasm. In terms of biological role, enhancer of SUMO conjugation. Via its interaction with UBE2I/UBC9, increases SUMO conjugation to proteins by promoting the binding of E1 and E2 enzymes, thioester linkage between SUMO and UBE2I/UBC9 and transfer of SUMO to specific target proteins which include HIF1A, PIAS, NFKBIA, NR3C1 and TOP1. Positively regulates the NF-kappa-B signaling pathway by enhancing the sumoylation of NF-kappa-B inhibitor alpha (NFKBIA), promoting its stabilization which consequently leads to an increased inhibition of NF-kappa-B transcriptional activity. Negatively regulates the hypoxia-inducible factor-1 alpha (HIF1A) signaling pathway by increasing the sumoylation of HIF1A, promoting its stabilization, transcriptional activity and the expression of its target gene VEGFA during hypoxia. Has no effect on ubiquitination. This is RWD domain-containing protein 3 (Rwdd3) from Rattus norvegicus (Rat).